The primary structure comprises 396 residues: Inhibitory POU protein (396 aa).

The POU-IV box motif lies at 86–95 (RAEALAAVDI). The 78-residue stretch at 222–299 (DTDTDPRELE…ILQAWLEEAE (78 aa)) folds into the POU-specific domain. A disordered region spans residues 302 to 328 (AKNKRRDPDAPSVLPAGEKKRKRTSIA). Residues 320-377 (KKRKRTSIAAPEKRSLEAYFAVQPRPSGEKIAAIAEKLDLKKNVVRVWFCNQRQKQKR) constitute a DNA-binding region (homeobox; atypical).

Belongs to the POU transcription factor family. Class-4 subfamily. Coexpressed with vvl in overlapping subsets of neurons in the embryonic central nervous system. Expressed in olfactory neurons.

The protein localises to the nucleus. In terms of biological role, modulates gene transcription; simultaneously generates both a specific activator and an inhibitor of gene transcription, capable of modulating two distinct regulatory programs during neural development. Has a role in olfactory behavior. In Drosophila melanogaster (Fruit fly), this protein is Inhibitory POU protein (acj6).